The primary structure comprises 101 residues: NADH-quinone oxidoreductase subunit K (101 aa).

Helical transmembrane passes span 4-24 (LGHYLTLGAILFALSVIGIFL), 30-50 (IVLLMCIELMLLAVNLNFVAF), and 61-81 (VFVFFILTVAAAESAIGLAIL).

Belongs to the complex I subunit 4L family. NDH-1 is composed of 14 different subunits. Subunits NuoA, H, J, K, L, M, N constitute the membrane sector of the complex.

It is found in the cell inner membrane. The catalysed reaction is a quinone + NADH + 5 H(+)(in) = a quinol + NAD(+) + 4 H(+)(out). Its function is as follows. NDH-1 shuttles electrons from NADH, via FMN and iron-sulfur (Fe-S) centers, to quinones in the respiratory chain. The immediate electron acceptor for the enzyme in this species is believed to be ubiquinone. Couples the redox reaction to proton translocation (for every two electrons transferred, four hydrogen ions are translocated across the cytoplasmic membrane), and thus conserves the redox energy in a proton gradient. This Leptothrix cholodnii (strain ATCC 51168 / LMG 8142 / SP-6) (Leptothrix discophora (strain SP-6)) protein is NADH-quinone oxidoreductase subunit K.